A 117-amino-acid polypeptide reads, in one-letter code: UPF0642 protein C32H8.05 (117 aa).

The disordered stretch occupies residues 39-117; sequence DQVNDLTKSS…SNFSKFLKKK (79 aa). Over residues 93 to 106 the composition is skewed to basic residues; it reads KWAKKHLKKGKRAK. Positions 107–117 are enriched in low complexity; that stretch reads NSNFSKFLKKK.

This sequence belongs to the UPF0642 family.

The protein localises to the nucleus. Its subcellular location is the nucleolus. This Schizosaccharomyces pombe (strain 972 / ATCC 24843) (Fission yeast) protein is UPF0642 protein C32H8.05.